The primary structure comprises 523 residues: GMP synthase [glutamine-hydrolyzing] (523 aa).

Positions Lys8–Lys205 constitute a Glutamine amidotransferase type-1 domain. Cys85 serves as the catalytic Nucleophile. Residues His179 and Glu181 contribute to the active site. A GMPS ATP-PPase domain is found at Trp206–Arg398. ATP is bound at residue Ser233–Ser239.

Homodimer.

The catalysed reaction is XMP + L-glutamine + ATP + H2O = GMP + L-glutamate + AMP + diphosphate + 2 H(+). It functions in the pathway purine metabolism; GMP biosynthesis; GMP from XMP (L-Gln route): step 1/1. Functionally, catalyzes the synthesis of GMP from XMP. This is GMP synthase [glutamine-hydrolyzing] from Actinobacillus pleuropneumoniae serotype 5b (strain L20).